Reading from the N-terminus, the 129-residue chain is Small ribosomal subunit protein uS12 (129 aa).

Aspartate 89 carries the 3-methylthioaspartic acid modification. The segment at 101–129 (SLDTSGVADRKQSRSKYGAKQPKAGAAKK) is disordered. The segment covering 116-129 (KYGAKQPKAGAAKK) has biased composition (low complexity).

This sequence belongs to the universal ribosomal protein uS12 family. In terms of assembly, part of the 30S ribosomal subunit. Contacts proteins S8 and S17. May interact with IF1 in the 30S initiation complex.

In terms of biological role, with S4 and S5 plays an important role in translational accuracy. Functionally, interacts with and stabilizes bases of the 16S rRNA that are involved in tRNA selection in the A site and with the mRNA backbone. Located at the interface of the 30S and 50S subunits, it traverses the body of the 30S subunit contacting proteins on the other side and probably holding the rRNA structure together. The combined cluster of proteins S8, S12 and S17 appears to hold together the shoulder and platform of the 30S subunit. This chain is Small ribosomal subunit protein uS12, found in Chlorobaculum parvum (strain DSM 263 / NCIMB 8327) (Chlorobium vibrioforme subsp. thiosulfatophilum).